A 433-amino-acid chain; its full sequence is Glutamate-1-semialdehyde 2,1-aminomutase (433 aa).

Position 273 is an N6-(pyridoxal phosphate)lysine (Lys273).

Belongs to the class-III pyridoxal-phosphate-dependent aminotransferase family. HemL subfamily. As to quaternary structure, homodimer. Requires pyridoxal 5'-phosphate as cofactor.

It is found in the cytoplasm. The enzyme catalyses (S)-4-amino-5-oxopentanoate = 5-aminolevulinate. It participates in porphyrin-containing compound metabolism; protoporphyrin-IX biosynthesis; 5-aminolevulinate from L-glutamyl-tRNA(Glu): step 2/2. Its pathway is porphyrin-containing compound metabolism; chlorophyll biosynthesis. This Rippkaea orientalis (strain PCC 8801 / RF-1) (Cyanothece sp. (strain PCC 8801)) protein is Glutamate-1-semialdehyde 2,1-aminomutase.